A 321-amino-acid chain; its full sequence is Citrate synthase (321 aa).

Active-site residues include H248 and D306.

This sequence belongs to the citrate synthase family.

The enzyme catalyses oxaloacetate + acetyl-CoA + H2O = citrate + CoA + H(+). It functions in the pathway carbohydrate metabolism; tricarboxylic acid cycle; isocitrate from oxaloacetate: step 1/2. This chain is Citrate synthase (gltA), found in Bartonella bacilliformis.